Reading from the N-terminus, the 173-residue chain is Dual-action ribosomal maturation protein DarP (173 aa).

The protein belongs to the DarP family.

The protein resides in the cytoplasm. Functionally, member of a network of 50S ribosomal subunit biogenesis factors which assembles along the 30S-50S interface, preventing incorrect 23S rRNA structures from forming. Promotes peptidyl transferase center (PTC) maturation. The sequence is that of Dual-action ribosomal maturation protein DarP from Pseudomonas syringae pv. tomato (strain ATCC BAA-871 / DC3000).